Here is a 61-residue protein sequence, read N- to C-terminus: Small ribosomal subunit protein uS14 (61 aa).

The Zn(2+) site is built by Cys24, Cys27, Cys40, and Cys43.

Belongs to the universal ribosomal protein uS14 family. Zinc-binding uS14 subfamily. As to quaternary structure, part of the 30S ribosomal subunit. Contacts proteins S3 and S10. It depends on Zn(2+) as a cofactor.

Its function is as follows. Binds 16S rRNA, required for the assembly of 30S particles and may also be responsible for determining the conformation of the 16S rRNA at the A site. This is Small ribosomal subunit protein uS14 from Coprothermobacter proteolyticus (strain ATCC 35245 / DSM 5265 / OCM 4 / BT).